The primary structure comprises 89 residues: Small ribosomal subunit protein uS15 (89 aa).

Belongs to the universal ribosomal protein uS15 family. As to quaternary structure, part of the 30S ribosomal subunit. Forms a bridge to the 50S subunit in the 70S ribosome, contacting the 23S rRNA.

Its function is as follows. One of the primary rRNA binding proteins, it binds directly to 16S rRNA where it helps nucleate assembly of the platform of the 30S subunit by binding and bridging several RNA helices of the 16S rRNA. Forms an intersubunit bridge (bridge B4) with the 23S rRNA of the 50S subunit in the ribosome. The protein is Small ribosomal subunit protein uS15 of Nitrosococcus oceani (strain ATCC 19707 / BCRC 17464 / JCM 30415 / NCIMB 11848 / C-107).